Consider the following 61-residue polypeptide: Small ribosomal subunit protein uS14 (61 aa).

Positions 24, 27, 40, and 43 each coordinate Zn(2+).

This sequence belongs to the universal ribosomal protein uS14 family. Zinc-binding uS14 subfamily. Part of the 30S ribosomal subunit. Contacts proteins S3 and S10. Zn(2+) is required as a cofactor.

Functionally, binds 16S rRNA, required for the assembly of 30S particles and may also be responsible for determining the conformation of the 16S rRNA at the A site. This is Small ribosomal subunit protein uS14 from Clostridium acetobutylicum (strain ATCC 824 / DSM 792 / JCM 1419 / IAM 19013 / LMG 5710 / NBRC 13948 / NRRL B-527 / VKM B-1787 / 2291 / W).